The following is a 387-amino-acid chain: Mitochondrial import inner membrane translocase subunit TIM50 (387 aa).

A mitochondrion-targeting transit peptide spans 1–26 (MSAVSVYPMCVRASRGLLRLRQGARC). Residues 27–100 (STAPPLLDVV…QKENTAYAKK (74 aa)) are Mitochondrial matrix-facing. Positions 61–93 (LQQQQKSQEQPPPEGEDSGHKQDEQGEDKKQKE) are disordered. Over residues 77–93 (DSGHKQDEQGEDKKQKE) the composition is skewed to basic and acidic residues. Residues 101–121 (MVLRLAGIMGLGGTVGIVYIF) form a helical membrane-spanning segment. Topologically, residues 122–387 (GSNSVDEQGN…AGRFWSRKQQ (266 aa)) are mitochondrial intermembrane. Residues 178-321 (YYQPPYTLVL…YDLAAFLKTI (144 aa)) form the FCP1 homology domain.

This sequence belongs to the TIM50 family. Component of the TIM23 complex at least composed of timm23, timm17 and timm50.

The protein resides in the mitochondrion inner membrane. Functionally, essential component of the TIM23 complex, a complex that mediates the translocation of transit peptide-containing proteins across the mitochondrial inner membrane. The polypeptide is Mitochondrial import inner membrane translocase subunit TIM50 (timm50) (Danio rerio (Zebrafish)).